A 431-amino-acid polypeptide reads, in one-letter code: MIERYSRPEMSAIWTDENRFQAWLEVEILACEAWAELGVIPKEDVKVMRENASFDINRILEIEKDTRHDVVAFTRAVSESLGEERKWVHYGLTSTDVVDTALSYLLKQANDILLKDLERFVDIIKEKAKEHKYTVMMGRTHGVHAEPTTFGLKLALWHEEMKRNLERFKQAKAGIEVGKISGAVGTYANIDPFVEQYVCEKLGLKAAPISTQTLQRDRHADYMATLALIATSIEKFAVEIRGLQKSETREVEEFFAKGQKGSSAMPHKRNPIGSENMTGMARVIRGYMMTAYENVPLWHERDISHSSAERIILPDATIALNYMLNRFSNIVKNLTVFPENMKRNMDRTLGLIYSQRVLLALIDTGLTREEAYDTVQPKAMEAWEKQVPFRELVEAEEKITSRLSPEKIADCFDYNYHLKNVDLIFERLGLA.

N(6)-(1,2-dicarboxyethyl)-AMP contacts are provided by residues 4–5 (RY), 67–69 (RHD), and 93–94 (TS). Catalysis depends on H141, which acts as the Proton donor/acceptor. Q212 is a N(6)-(1,2-dicarboxyethyl)-AMP binding site. Residue S262 is the Proton donor/acceptor of the active site. N(6)-(1,2-dicarboxyethyl)-AMP contacts are provided by residues S263, 268 to 270 (KRN), N276, and 307 to 311 (SAERI).

This sequence belongs to the lyase 1 family. Adenylosuccinate lyase subfamily. In terms of assembly, homotetramer. Residues from neighboring subunits contribute catalytic and substrate-binding residues to each active site.

The catalysed reaction is N(6)-(1,2-dicarboxyethyl)-AMP = fumarate + AMP. It carries out the reaction (2S)-2-[5-amino-1-(5-phospho-beta-D-ribosyl)imidazole-4-carboxamido]succinate = 5-amino-1-(5-phospho-beta-D-ribosyl)imidazole-4-carboxamide + fumarate. It functions in the pathway purine metabolism; AMP biosynthesis via de novo pathway; AMP from IMP: step 2/2. The protein operates within purine metabolism; IMP biosynthesis via de novo pathway; 5-amino-1-(5-phospho-D-ribosyl)imidazole-4-carboxamide from 5-amino-1-(5-phospho-D-ribosyl)imidazole-4-carboxylate: step 2/2. In terms of biological role, catalyzes two reactions in de novo purine nucleotide biosynthesis. Catalyzes the breakdown of 5-aminoimidazole- (N-succinylocarboxamide) ribotide (SAICAR or 2-[5-amino-1-(5-phospho-beta-D-ribosyl)imidazole-4-carboxamido]succinate) to 5-aminoimidazole-4-carboxamide ribotide (AICAR or 5-amino-1-(5-phospho-beta-D-ribosyl)imidazole-4-carboxamide) and fumarate, and of adenylosuccinate (ADS or N(6)-(1,2-dicarboxyethyl)-AMP) to adenosine monophosphate (AMP) and fumarate. Influences the affinity of glutamyl--tRNA ligase for its substrates and increases its thermostability. This is Adenylosuccinate lyase (purB) from Bacillus subtilis (strain 168).